Here is a 122-residue protein sequence, read N- to C-terminus: Large ribosomal subunit protein uL14c (122 aa).

Belongs to the universal ribosomal protein uL14 family. In terms of assembly, part of the 50S ribosomal subunit.

The protein resides in the plastid. Its subcellular location is the chloroplast. Functionally, binds to 23S rRNA. This chain is Large ribosomal subunit protein uL14c, found in Lactuca sativa (Garden lettuce).